The sequence spans 1083 residues: Error-prone DNA polymerase (1083 aa).

Belongs to the DNA polymerase type-C family. DnaE2 subfamily.

It localises to the cytoplasm. The catalysed reaction is DNA(n) + a 2'-deoxyribonucleoside 5'-triphosphate = DNA(n+1) + diphosphate. Functionally, DNA polymerase involved in damage-induced mutagenesis and translesion synthesis (TLS). It is not the major replicative DNA polymerase. The polypeptide is Error-prone DNA polymerase (Xanthomonas oryzae pv. oryzae (strain PXO99A)).